The primary structure comprises 502 residues: UDP-N-acetylmuramoylalanine--D-glutamate ligase (502 aa).

129 to 135 provides a ligand contact to ATP; that stretch reads GTNGKTT. The segment at 288 to 307 is disordered; sequence APDETTSRRRKRDGAHTPDI.

The protein belongs to the MurCDEF family.

The protein localises to the cytoplasm. It catalyses the reaction UDP-N-acetyl-alpha-D-muramoyl-L-alanine + D-glutamate + ATP = UDP-N-acetyl-alpha-D-muramoyl-L-alanyl-D-glutamate + ADP + phosphate + H(+). The protein operates within cell wall biogenesis; peptidoglycan biosynthesis. In terms of biological role, cell wall formation. Catalyzes the addition of glutamate to the nucleotide precursor UDP-N-acetylmuramoyl-L-alanine (UMA). The sequence is that of UDP-N-acetylmuramoylalanine--D-glutamate ligase from Burkholderia ambifaria (strain ATCC BAA-244 / DSM 16087 / CCUG 44356 / LMG 19182 / AMMD) (Burkholderia cepacia (strain AMMD)).